The sequence spans 422 residues: Keratin, type II cytoskeletal 80 (422 aa).

Positions 1–82 (MACRSCVVGF…DPAIQQQKNN (82 aa)) are head. Position 45 is a phosphoserine (serine 45). The interval 83–118 (EKEEMKVLNDKFASLIGKVQALEQRNQLLETRWHFL) is coil 1A. Positions 83–394 (EKEEMKVLND…KLMEGEESRM (312 aa)) constitute an IF rod domain. A linker 1 region spans residues 119 to 135 (QSQDSATFDLGHLYEEY). The interval 136 to 227 (QGRLQEELRK…SIYEQELKDL (92 aa)) is coil 1B. The tract at residues 228 to 251 (AAQLKDVSVTVGMDSRCHIDLSGI) is linker 12. A coil 2 region spans residues 252 to 390 (VEEVKAQYDA…ATYRKLMEGE (139 aa)). Positions 391 to 422 (ESRMDMPSATVVSAVQARCRTAPTLPHPLCSL) are tail.

It belongs to the intermediate filament family. As to quaternary structure, heterotetramer of two type I and two type II keratins.

This Bos taurus (Bovine) protein is Keratin, type II cytoskeletal 80 (KRT80).